A 604-amino-acid polypeptide reads, in one-letter code: Sulfite reductase [NADPH] flavoprotein alpha-component (604 aa).

In terms of domain architecture, Flavodoxin-like spans 65-203 (VTILYGSQTG…AAGQWHADVL (139 aa)). FMN contacts are provided by residues 71–76 (SQTGNG), 118–121 (STHG), and 154–163 (LGDSSYEFFC). The FAD-binding FR-type domain occupies 236 to 453 (QNPYSAEVLV…VEPNKHFRLP (218 aa)). Residues threonine 324, leucine 358, 392-395 (RLYS), 410-412 (TVA), and 425-428 (GGAS) each bind FAD. NADP(+) is bound by residues 524–525 (SR), 530–534 (KIYVQ), and aspartate 566. Tyrosine 604 is an FAD binding site.

Belongs to the NADPH-dependent sulphite reductase flavoprotein subunit CysJ family. The protein in the N-terminal section; belongs to the flavodoxin family. It in the C-terminal section; belongs to the flavoprotein pyridine nucleotide cytochrome reductase family. In terms of assembly, alpha(8)-beta(8). The alpha component is a flavoprotein, the beta component is a hemoprotein. Requires FAD as cofactor. FMN is required as a cofactor.

It carries out the reaction hydrogen sulfide + 3 NADP(+) + 3 H2O = sulfite + 3 NADPH + 4 H(+). Its pathway is sulfur metabolism; hydrogen sulfide biosynthesis; hydrogen sulfide from sulfite (NADPH route): step 1/1. Its function is as follows. Component of the sulfite reductase complex that catalyzes the 6-electron reduction of sulfite to sulfide. This is one of several activities required for the biosynthesis of L-cysteine from sulfate. The flavoprotein component catalyzes the electron flow from NADPH -&gt; FAD -&gt; FMN to the hemoprotein component. This is Sulfite reductase [NADPH] flavoprotein alpha-component from Shewanella sp. (strain ANA-3).